The sequence spans 358 residues: Aromatic amino acid aminotransferase (358 aa).

At K214 the chain carries N6-(pyridoxal phosphate)lysine.

The protein belongs to the class-II pyridoxal-phosphate-dependent aminotransferase family. In terms of assembly, homodimer. The cofactor is pyridoxal 5'-phosphate.

It catalyses the reaction an aromatic L-alpha-amino acid + 2-oxoglutarate = an aromatic oxo-acid + L-glutamate. In terms of biological role, aminotransferase that catalyzes the conversion of aromatic amino acids and 2-oxoglutarate into corresponding aromatic oxo acids and L-glutamate. This is Aromatic amino acid aminotransferase from Rhodococcus opacus (strain B4).